A 119-amino-acid chain; its full sequence is Large ribosomal subunit protein bL17 (119 aa).

The protein belongs to the bacterial ribosomal protein bL17 family. Part of the 50S ribosomal subunit. Contacts protein L32.

This chain is Large ribosomal subunit protein bL17, found in Ureaplasma parvum serovar 3 (strain ATCC 27815 / 27 / NCTC 11736).